A 1523-amino-acid chain; its full sequence is Rho GTPase-activating protein gacHH (1523 aa).

3 Kelch repeats span residues 30-76, 83-133, and 135-184; these read DIVI…YGHS, KMFV…LIYD, and YILI…DISP. 2 stretches are compositionally biased toward polar residues: residues 161–173 and 184–194; these read NSWTKPSSNSSTG and PRSSTTTPTHQ. Positions 161 to 256 are disordered; sequence NSWTKPSSNS…GGSPMTTPPT (96 aa). A compositionally biased stretch (low complexity) spans 195 to 211; the sequence is SVNGSNSNSSSSSRVRS. Residues 212–221 are compositionally biased toward polar residues; sequence ATISSHNNSP. A compositionally biased stretch (low complexity) spans 227-244; the sequence is NNNNNNNNNSNNSNNSNN. 3 Kelch repeats span residues 335-384, 386-441, and 443-496; these read KAFI…AIGS, LFIF…PISS, and ILII…PITS. Disordered regions lie at residues 510–569, 609–631, and 647–671; these read LPHL…DNIN, QSIDRNGGSGGGSGGGNGVVSND, and NKNNNNNNNNNSGGSNLSISSNSGS. Gly residues predominate over residues 615-626; it reads GGSGGGSGGGNG. A coiled-coil region spans residues 690–729; it reads CIKKYNSLKDSYLELKQKYQEEREKRLELEKELERYRLSS. Positions 748-786 are disordered; the sequence is NINSNNSTTTTTTTTTTTTTPIPLSTSNNNNNNNNNSTL. Positions 812 to 840 form a coiled coil; sequence YEKRVKWKENTEKEANQQLEVIKSKIDLF. 5 disordered regions span residues 861 to 881, 905 to 927, 963 to 991, 1006 to 1096, and 1143 to 1194; these read SENINGDHNQQQQQQQQQNPQ, LTPRKSRENSVHHSRSVSNPIPL, TPQKPPQQPQQQQQQQPPQENGKEPSKST, SGHF…RLGK, and NGAN…SERI. The span at 870 to 881 shows a compositional bias: low complexity; it reads QQQQQQQQQNPQ. Residues 905–915 show a composition bias toward basic and acidic residues; the sequence is LTPRKSRENSV. Composition is skewed to low complexity over residues 971-981, 1012-1030, 1043-1079, and 1143-1153; these read PQQQQQQQPPQ, SSSNESSNSEETTPTFSNN, QHQQQTNIGSNSISNINTSNSTTSLSSSVSSTSLQTQ, and NGANNLGGLVL. Residues 1151–1228 are a coiled coil; it reads LVLTSDKEKE…KKHKKIKGLF (78 aa). Basic and acidic residues predominate over residues 1155 to 1194; the sequence is SDKEKEKLEKEREKSERIEREKQEKEREKLEKEREKSERI. Residues 1233-1411 form the Rho-GAP domain; that stretch reads SNKESLPFRR…TFIEDFHYIF (179 aa). The interval 1425-1482 is disordered; the sequence is DDDYDSSSFGSNNTPSSHSPHSSSPTLNPAVTTTTTTTTTTNTTTTTNTTTTPTSATI. A compositionally biased stretch (low complexity) spans 1430 to 1476; the sequence is SSSFGSNNTPSSHSPHSSSPTLNPAVTTTTTTTTTTNTTTTTNTTTT.

The protein localises to the cytoplasm. Functionally, rho GTPase-activating protein involved in the signal transduction pathway. The chain is Rho GTPase-activating protein gacHH (gacHH) from Dictyostelium discoideum (Social amoeba).